A 1332-amino-acid polypeptide reads, in one-letter code: DNA-directed RNA polymerase subunit beta'' (1332 aa).

4 residues coordinate Zn(2+): C220, C291, C298, and C301.

Belongs to the RNA polymerase beta' chain family. RpoC2 subfamily. In terms of assembly, in plastids the minimal PEP RNA polymerase catalytic core is composed of four subunits: alpha, beta, beta', and beta''. When a (nuclear-encoded) sigma factor is associated with the core the holoenzyme is formed, which can initiate transcription. Requires Zn(2+) as cofactor.

Its subcellular location is the plastid. The protein localises to the chloroplast. The catalysed reaction is RNA(n) + a ribonucleoside 5'-triphosphate = RNA(n+1) + diphosphate. Its function is as follows. DNA-dependent RNA polymerase catalyzes the transcription of DNA into RNA using the four ribonucleoside triphosphates as substrates. The sequence is that of DNA-directed RNA polymerase subunit beta'' from Lotus japonicus (Lotus corniculatus var. japonicus).